Consider the following 473-residue polypeptide: Histidinol dehydrogenase, chloroplastic (473 aa).

The interval 1–28 (MSLRPGRAHPLAASPLHTPLPARPRPQL) is disordered. NAD(+)-binding residues include tyrosine 162, glutamine 224, and asparagine 247. Serine 273, glutamine 295, and histidine 298 together coordinate substrate. The Zn(2+) site is built by glutamine 295 and histidine 298. Active-site proton acceptor residues include glutamate 363 and histidine 364. Residues histidine 364, aspartate 397, glutamate 451, and histidine 456 each contribute to the substrate site. Aspartate 397 contributes to the Zn(2+) binding site. Histidine 456 provides a ligand contact to Zn(2+).

The protein belongs to the histidinol dehydrogenase family. It depends on Zn(2+) as a cofactor.

It localises to the plastid. It is found in the chloroplast. The enzyme catalyses L-histidinol + 2 NAD(+) + H2O = L-histidine + 2 NADH + 3 H(+). It functions in the pathway amino-acid biosynthesis; L-histidine biosynthesis; L-histidine from 5-phospho-alpha-D-ribose 1-diphosphate: step 9/9. Its function is as follows. Catalyzes the sequential NAD-dependent oxidations of L-histidinol to L-histidinaldehyde and then to L-histidine. In Oryza sativa subsp. japonica (Rice), this protein is Histidinol dehydrogenase, chloroplastic (HDH).